We begin with the raw amino-acid sequence, 263 residues long: uncharacterized protein (263 aa).

Belongs to the flavoredoxin family. FMN serves as cofactor.

This is an uncharacterized protein from Aeropyrum pernix (strain ATCC 700893 / DSM 11879 / JCM 9820 / NBRC 100138 / K1).